The sequence spans 402 residues: S-adenosylmethionine synthase (402 aa).

137 to 142 (GQGSAD) is a binding site for ATP.

This sequence belongs to the AdoMet synthase 2 family. It depends on Mg(2+) as a cofactor.

The enzyme catalyses L-methionine + ATP + H2O = S-adenosyl-L-methionine + phosphate + diphosphate. Its pathway is amino-acid biosynthesis; S-adenosyl-L-methionine biosynthesis; S-adenosyl-L-methionine from L-methionine: step 1/1. Functionally, catalyzes the formation of S-adenosylmethionine from methionine and ATP. The protein is S-adenosylmethionine synthase of Pyrobaculum calidifontis (strain DSM 21063 / JCM 11548 / VA1).